The sequence spans 418 residues: Acyltransferase calJ (418 aa).

Residue Ser-79 is the Acyl-ester intermediate of the active site. 2 residues coordinate substrate: Arg-176 and Tyr-191.

It belongs to the class-A beta-lactamase family.

Its pathway is secondary metabolite biosynthesis. Functionally, acyltransferase; part of the gene cluster that mediates the biosynthesis of calbistrin A and related compounds. Calbistrin A is a secondary metabolite with an interesting structure that was recently found to have bioactivity against leukemia cells. It consists of two polyketides linked by an ester bond: a bicyclic decalin containing polyketide and a linear 12 carbon dioic acid structure. The polyketide synthase calA is probably responsible for forming the decalin moiety. Because calA lacks a designated enoylreductase (ER) domain, the required activity is provided by the trans-enoyl reductase calK. Following release from the PKS, calF then probably catalyzes the oxidation and the subsequent Diels Alder cycloisomerization that lead to the formation of the decalin moiety. The decalin polyketide backbone includes two C-methyl groups, at C7 and C11 in backbone, of which the C7 position is probably methylated by the methyltransferase domain of calA. A candidate for adding the methyl group at C11, if not done by CalA, is the cluster methyltransferase calH. Several additional tailoring enzymes within the cluster could be involved in the modification of the decalin polyketide product. Those include the 3 cytochrome P450 monooxygenases CalE, CalG and CalL, of which one might be responsible for the introduction of the extra hydroxyl group attached to the backbone of the decalin moiety, at position C9 in the backbone, that allows for attachment of the linear moiety. One tailoring enzyme activity that is expected to be involved in biosynthesis of calbistrin is an acyltransferase for connecting the two polyketide synthase products, and which could be performed by the cluster acyltransferase calJ. The enzyme responsible for the biosynthesis of the linear moiety, probably a second PKS, has not been identified yet. This chain is Acyltransferase calJ, found in Penicillium decumbens.